A 156-amino-acid polypeptide reads, in one-letter code: Small ribosomal subunit protein uS7 (156 aa).

It belongs to the universal ribosomal protein uS7 family. In terms of assembly, part of the 30S ribosomal subunit. Contacts proteins S9 and S11.

Functionally, one of the primary rRNA binding proteins, it binds directly to 16S rRNA where it nucleates assembly of the head domain of the 30S subunit. Is located at the subunit interface close to the decoding center, probably blocks exit of the E-site tRNA. This chain is Small ribosomal subunit protein uS7, found in Streptococcus mutans serotype c (strain ATCC 700610 / UA159).